The sequence spans 218 residues: Protein-methionine-sulfoxide reductase heme-binding subunit MsrQ (218 aa).

The next 5 membrane-spanning stretches (helical) occupy residues 8–28 (VIVA…LLGW), 60–80 (FLLI…AVLI), 86–106 (LGLY…TLDL), 121–141 (PYIT…ITST), and 155–175 (VHML…WLVK).

The protein belongs to the MsrQ family. In terms of assembly, heterodimer of a catalytic subunit (MsrP) and a heme-binding subunit (MsrQ). It depends on FMN as a cofactor. Heme b serves as cofactor.

The protein localises to the cell inner membrane. Functionally, part of the MsrPQ system that repairs oxidized periplasmic proteins containing methionine sulfoxide residues (Met-O), using respiratory chain electrons. Thus protects these proteins from oxidative-stress damage caused by reactive species of oxygen and chlorine generated by the host defense mechanisms. MsrPQ is essential for the maintenance of envelope integrity under bleach stress, rescuing a wide series of structurally unrelated periplasmic proteins from methionine oxidation. MsrQ provides electrons for reduction to the reductase catalytic subunit MsrP, using the quinone pool of the respiratory chain. In Xanthomonas oryzae pv. oryzae (strain MAFF 311018), this protein is Protein-methionine-sulfoxide reductase heme-binding subunit MsrQ.